We begin with the raw amino-acid sequence, 399 residues long: uncharacterized protein (399 aa).

Helical transmembrane passes span 19–39 (IFSINLLYMGILSGISYPLFV), 46–66 (VNLLFAIVIGAVFEIPLLLMY), 91–111 (FYTIFGISLWLTYVLSQPILG), 123–143 (QFEQFLIVESLFPLVLLIIAS), 146–166 (IYAKIVDILAIFQIIIAIFIA), 183–203 (LLSALLFDLSAFIFINAISYI), 225–247 (VAILSILDSYSNLNILFALMPIW), 283–303 (VLLLIFSTETIANVLENLLGF), 307–327 (FGLDGLLFIFWNFIIVAFAYL), 335–355 (LFSIVLTSLAIQIFLFFYLGY), and 369–389 (IEYTILRIMILPIIGAIVYLL).

The protein resides in the host membrane. Putative amino acid transporter. This is an uncharacterized protein from Saccharolobus islandicus (Sulfolobus islandicus).